Here is a 157-residue protein sequence, read N- to C-terminus: Small ribosomal subunit protein uS7 (157 aa).

Belongs to the universal ribosomal protein uS7 family. In terms of assembly, part of the 30S ribosomal subunit. Contacts proteins S9 and S11.

In terms of biological role, one of the primary rRNA binding proteins, it binds directly to 16S rRNA where it nucleates assembly of the head domain of the 30S subunit. Is located at the subunit interface close to the decoding center, probably blocks exit of the E-site tRNA. The chain is Small ribosomal subunit protein uS7 from Chlamydia trachomatis serovar L2 (strain ATCC VR-902B / DSM 19102 / 434/Bu).